We begin with the raw amino-acid sequence, 275 residues long: Methylglyoxal reductase DkgA (275 aa).

Tyr51 serves as the catalytic Proton donor. His107 serves as a coordination point for substrate. 187–241 (SPLAQGGKGVFDQKVIRDLADKYGKTPAQIVIRWHLDSGLVVIPKSVTPSRIAEN) is an NADP(+) binding site.

It belongs to the aldo/keto reductase family. As to quaternary structure, monomer.

Its subcellular location is the cytoplasm. It catalyses the reaction hydroxyacetone + NADP(+) = methylglyoxal + NADPH + H(+). Its function is as follows. Aldo-keto reductase that significantly contributes to cellular methylglyoxal detoxification by catalyzing the NADPH-dependent conversion of methylglyoxal to acetol. The chain is Methylglyoxal reductase DkgA from Escherichia coli O157:H7.